Here is a 308-residue protein sequence, read N- to C-terminus: D-alanine--D-alanine ligase (308 aa).

In terms of domain architecture, ATP-grasp spans 104 to 301 (KQIWQGSDLP…FDELCVAILE (198 aa)). An ATP-binding site is contributed by 130-185 (IAELGLPVIIKPVHEGSSVGMSKVEKAEDFAAAIEKATQHDAVVMAEKWITGREFT). The Mg(2+) site is built by Asp255, Glu268, and Asn270.

It belongs to the D-alanine--D-alanine ligase family. Mg(2+) serves as cofactor. Requires Mn(2+) as cofactor.

It localises to the cytoplasm. The enzyme catalyses 2 D-alanine + ATP = D-alanyl-D-alanine + ADP + phosphate + H(+). Its pathway is cell wall biogenesis; peptidoglycan biosynthesis. Cell wall formation. This Acinetobacter baumannii (strain ACICU) protein is D-alanine--D-alanine ligase.